Here is a 203-residue protein sequence, read N- to C-terminus: Small ribosomal subunit protein uS4c (203 aa).

The tract at residues 15 to 43 (LGSLPGLTSKRPRSGSDLRNQSRSGKRSQ) is disordered. Residues 89-169 (MRLDNILFRL…LPKHLTLHSL (81 aa)) enclose the S4 RNA-binding domain.

It belongs to the universal ribosomal protein uS4 family. As to quaternary structure, part of the 30S ribosomal subunit. Contacts protein S5. The interaction surface between S4 and S5 is involved in control of translational fidelity.

The protein localises to the plastid. It localises to the chloroplast. Functionally, one of the primary rRNA binding proteins, it binds directly to 16S rRNA where it nucleates assembly of the body of the 30S subunit. In terms of biological role, with S5 and S12 plays an important role in translational accuracy. The sequence is that of Small ribosomal subunit protein uS4c (rps4) from Illicium oligandrum (Star anise).